Consider the following 209-residue polypeptide: COP9 signalosome complex subunit 8 (209 aa).

In terms of domain architecture, PCI spans 8–179 (DNAFSFRKLL…GTLDVSLNRF (172 aa)). S175 is subject to Phosphoserine.

The protein belongs to the CSN8 family. In terms of assembly, component of the CSN complex, composed of COPS1/GPS1, COPS2, COPS3, COPS4, COPS5, COPS6, COPS7 (COPS7A or COPS7B), COPS8 and COPS9. In the complex, it probably interacts directly with COPS3, COPS4 and COPS7 (COPS7A or COPS7B). Widely expressed.

The protein resides in the cytoplasm. The protein localises to the nucleus. In terms of biological role, component of the COP9 signalosome complex (CSN), a complex involved in various cellular and developmental processes. The CSN complex is an essential regulator of the ubiquitin (Ubl) conjugation pathway by mediating the deneddylation of the cullin subunits of SCF-type E3 ligase complexes, leading to decrease the Ubl ligase activity of SCF-type complexes such as SCF, CSA or DDB2. The complex is also involved in phosphorylation of p53/TP53, c-jun/JUN, IkappaBalpha/NFKBIA, ITPK1 and IRF8/ICSBP, possibly via its association with CK2 and PKD kinases. CSN-dependent phosphorylation of TP53 and JUN promotes and protects degradation by the Ubl system, respectively. The polypeptide is COP9 signalosome complex subunit 8 (Cops8) (Mus musculus (Mouse)).